The sequence spans 390 residues: Succinate--CoA ligase [ADP-forming] subunit beta (390 aa).

The region spanning 9–245 (KELLSRYGLP…KSQENEREVK (237 aa)) is the ATP-grasp domain. Residues Lys46, 53–55 (GRG), Glu100, Tyr103, and Glu108 each bind ATP. The Mg(2+) site is built by Asn200 and Asp214. Substrate is bound by residues Asn265 and 322–324 (GIV).

It belongs to the succinate/malate CoA ligase beta subunit family. Heterotetramer of two alpha and two beta subunits. Requires Mg(2+) as cofactor.

The enzyme catalyses succinate + ATP + CoA = succinyl-CoA + ADP + phosphate. It carries out the reaction GTP + succinate + CoA = succinyl-CoA + GDP + phosphate. It participates in carbohydrate metabolism; tricarboxylic acid cycle; succinate from succinyl-CoA (ligase route): step 1/1. Functionally, succinyl-CoA synthetase functions in the citric acid cycle (TCA), coupling the hydrolysis of succinyl-CoA to the synthesis of either ATP or GTP and thus represents the only step of substrate-level phosphorylation in the TCA. The beta subunit provides nucleotide specificity of the enzyme and binds the substrate succinate, while the binding sites for coenzyme A and phosphate are found in the alpha subunit. The protein is Succinate--CoA ligase [ADP-forming] subunit beta of Chromobacterium violaceum (strain ATCC 12472 / DSM 30191 / JCM 1249 / CCUG 213 / NBRC 12614 / NCIMB 9131 / NCTC 9757 / MK).